The primary structure comprises 432 residues: Glutamate--tRNA ligase 2 (432 aa).

The 'HIGH' region signature appears at 6–16 (PSPTGDMHIGN). The 'KMSKS' region signature appears at 235-239 (KMSKR). Residue K238 coordinates ATP.

Belongs to the class-I aminoacyl-tRNA synthetase family. Glutamate--tRNA ligase type 1 subfamily. Monomer.

It is found in the cytoplasm. It carries out the reaction tRNA(Glu) + L-glutamate + ATP = L-glutamyl-tRNA(Glu) + AMP + diphosphate. Its function is as follows. Catalyzes the attachment of glutamate to tRNA(Glu) in a two-step reaction: glutamate is first activated by ATP to form Glu-AMP and then transferred to the acceptor end of tRNA(Glu). This chain is Glutamate--tRNA ligase 2, found in Sulfurimonas denitrificans (strain ATCC 33889 / DSM 1251) (Thiomicrospira denitrificans (strain ATCC 33889 / DSM 1251)).